Reading from the N-terminus, the 285-residue chain is Small ribosomal subunit biogenesis GTPase RsgA (285 aa).

One can recognise a CP-type G domain in the interval 61-215 (KNQLIRPKVA…IIDSPGFSSF (155 aa)). Residues 110 to 113 (TKID) and 159 to 167 (GQTGVGKTS) contribute to the GTP site. 4 residues coordinate Zn(2+): C239, C244, H246, and C254.

The protein belongs to the TRAFAC class YlqF/YawG GTPase family. RsgA subfamily. In terms of assembly, monomer. Associates with 30S ribosomal subunit, binds 16S rRNA. It depends on Zn(2+) as a cofactor.

The protein localises to the cytoplasm. Its function is as follows. One of several proteins that assist in the late maturation steps of the functional core of the 30S ribosomal subunit. Helps release RbfA from mature subunits. May play a role in the assembly of ribosomal proteins into the subunit. Circularly permuted GTPase that catalyzes slow GTP hydrolysis, GTPase activity is stimulated by the 30S ribosomal subunit. This Mesomycoplasma hyopneumoniae (strain J / ATCC 25934 / NCTC 10110) (Mycoplasma hyopneumoniae) protein is Small ribosomal subunit biogenesis GTPase RsgA.